Consider the following 444-residue polypeptide: MGSGDLNMKKSWHPQRSGNVAATQKAEAEAIAERKKLQQRLQEIEEERRKEEIQKALEAAGGKRKIDRVEWMYSGPTDGQAGDSAETEAYLLGKRRIDKLLQDNDTKKALSKQSQQDVLSAAGPAPVVTNARDVATKIREDPLLAIKRQEQQAYEAMMNDPIKRRQLLASMGIDDSQIAAKGGKEQRRHKHRSHHHRSDRHRDRDDDRDRDSARDRDRDRHSRRRRSDSRDRSRSRSPRRRSDSEEDRSKQRRRDSPDRTRRRDRDQSRSRGNRDRDDDRSRRHRFPQGRSRSRSGSPGGRSSRRREYSRERDSGGPSSRRDDRNSRDQNRPRRDYAKEDEQPKYDGGLNKGGRRQQQPDGDHKNAEEERAKKLAAMQAAATDLDKAREERLKALAEAERAEREADEKARQQNKKFRGGDAGFMSGLHSRAADMKIADRMNGRV.

Disordered regions lie at residues 1-27 (MGSG…QKAE), 168-385 (LASM…TDLD), and 397-425 (EAER…GFMS). The stretch at 19–65 (NVAATQKAEAEAIAERKKLQQRLQEIEEERRKEEIQKALEAAGGKRK) forms a coiled coil. The span at 186–199 (QRRHKHRSHHHRSD) shows a compositional bias: basic residues. 2 stretches are compositionally biased toward basic and acidic residues: residues 200-220 (RHRD…DRDR) and 228-281 (DSRD…DDRS). The segment covering 282–293 (RRHRFPQGRSRS) has biased composition (basic residues). Composition is skewed to basic and acidic residues over residues 305–344 (RREY…EQPK), 360–372 (DGDH…ERAK), and 397–410 (EAER…EKAR). Residues 364–417 (KNAEEERAKKLAAMQAAATDLDKAREERLKALAEAERAEREADEKARQQNKKFR) adopt a coiled-coil conformation.

This sequence belongs to the CWC25 family. Associated with the spliceosome.

The protein localises to the nucleus. Involved in pre-mRNA splicing. This chain is Pre-mRNA-splicing factor cwc25 (msp-6), found in Neurospora crassa (strain ATCC 24698 / 74-OR23-1A / CBS 708.71 / DSM 1257 / FGSC 987).